The following is a 1079-amino-acid chain: Eukaryotic translation initiation factor 5B (1079 aa).

Positions 1-478 (MGKKGKKSGY…QAAPAESNVS (478 aa)) are disordered. The segment covering 22–38 (SGQNEYLDNTSQDSPQN) has biased composition (polar residues). Residues 57–67 (SKKKKGKKNKG) show a composition bias toward basic residues. Phosphoserine is present on residues serine 73, serine 77, and serine 82. The span at 105-114 (KKGKKGKKSK) shows a compositional bias: basic residues. Phosphoserine is present on serine 127. Over residues 160–169 (NNNESEAAAP) the composition is skewed to low complexity. A compositionally biased stretch (basic and acidic residues) spans 173–192 (PEVRVKTKKEKEREKKEREK). A compositionally biased stretch (basic residues) spans 193-204 (LRKKQQQAKKKG). Positions 207–233 (GEDTLASSEVSSEVDISTPAENDSSAK) are enriched in polar residues. The span at 253–293 (MLEEKRAREEEEQRIREEEARIAEEEKRLAEVEEARKEEAR) shows a compositional bias: basic and acidic residues. Composition is skewed to low complexity over residues 321–334 (QQAL…QMLE) and 361–376 (RSGT…LESS). Phosphothreonine is present on threonine 364. Residues 385-408 (EPQKDSKDDSEKVEKETEVERKEE) are compositionally biased toward basic and acidic residues. A compositionally biased stretch (acidic residues) spans 409–431 (NEAEAEAVFDDWEAALEEPEVAE). The segment covering 436–466 (VTEKKETDIKSDAVEHSIKDKEDSKTDKVDD) has biased composition (basic and acidic residues). The 219-residue stretch at 482–700 (LRSPICCILG…LISLTQTRMS (219 aa)) folds into the tr-type G domain. Residues 491 to 498 (GHVDTGKT) are G1. A GTP-binding site is contributed by 491–498 (GHVDTGKT). Residues 516–520 (GITQQ) form a G2 region. A G3 region spans residues 555 to 558 (DTPG). Residues 609–612 (NKVD) are G4. The segment at 677-679 (SAQ) is G5.

Belongs to the TRAFAC class translation factor GTPase superfamily. Classic translation factor GTPase family. IF-2 subfamily. A monovalent cation serves as cofactor.

The protein localises to the cytoplasm. The catalysed reaction is GTP + H2O = GDP + phosphate + H(+). Plays a role in translation initiation. Translational GTPase that catalyzes the joining of the 40S and 60S subunits to form the 80S initiation complex with the initiator methionine-tRNA in the P-site base paired to the start codon. GTP binding and hydrolysis induces conformational changes in the enzyme that renders it active for productive interactions with the ribosome. The release of the enzyme after formation of the initiation complex is a prerequisite to form elongation-competent ribosomes. The sequence is that of Eukaryotic translation initiation factor 5B from Schizosaccharomyces pombe (strain 972 / ATCC 24843) (Fission yeast).